Here is a 351-residue protein sequence, read N- to C-terminus: Heat-inducible transcription repressor HrcA (351 aa).

This sequence belongs to the HrcA family.

Negative regulator of class I heat shock genes (grpE-dnaK-dnaJ and groELS operons). Prevents heat-shock induction of these operons. This is Heat-inducible transcription repressor HrcA from Acetivibrio thermocellus (strain ATCC 27405 / DSM 1237 / JCM 9322 / NBRC 103400 / NCIMB 10682 / NRRL B-4536 / VPI 7372) (Clostridium thermocellum).